Here is a 550-residue protein sequence, read N- to C-terminus: Urocanate hydratase (550 aa).

Residues 48 to 49 (GG), Gln126, 172 to 174 (GMG), Glu192, Arg197, 238 to 239 (NA), 259 to 263 (QTSAH), 268 to 269 (YL), and Tyr317 each bind NAD(+). Cys405 is a catalytic residue. Gly487 contacts NAD(+).

This sequence belongs to the urocanase family. The cofactor is NAD(+).

The protein localises to the cytoplasm. The enzyme catalyses 4-imidazolone-5-propanoate = trans-urocanate + H2O. It participates in amino-acid degradation; L-histidine degradation into L-glutamate; N-formimidoyl-L-glutamate from L-histidine: step 2/3. Functionally, catalyzes the conversion of urocanate to 4-imidazolone-5-propionate. This Saccharopolyspora erythraea (strain ATCC 11635 / DSM 40517 / JCM 4748 / NBRC 13426 / NCIMB 8594 / NRRL 2338) protein is Urocanate hydratase.